Reading from the N-terminus, the 300-residue chain is uncharacterized protein (300 aa).

2 disordered regions span residues 167–186 (DVFL…HHEH) and 224–244 (ADGS…DASH). The segment covering 224–236 (ADGSSLETSSMSS) has biased composition (polar residues).

This is an uncharacterized protein from Rattus norvegicus (Rat).